A 1030-amino-acid polypeptide reads, in one-letter code: Peroxisomal ATPase PEX6 (1030 aa).

The tract at residues 478 to 683 (VLLHSTTNNV…VETARMTATA (206 aa)) is AAA-cassette D1. Positions 767 to 956 (GILFYGPPGT…CSDAMLNAMS (190 aa)) are AAA-cassette D2. 772 to 779 (GPPGTGKT) contributes to the ATP binding site.

The protein belongs to the AAA ATPase family. As to quaternary structure, interacts with PEX1; forming the PEX1-PEX6 AAA ATPase complex, which is composed of a heterohexamer formed by a trimer of PEX1-PEX6 dimers. Interacts with PEX15; anchors PEX1-PEX6 heterooligomers to the peroxisomal membrane and mediates their association with the peroxisomal importomer. Interacts with UBP15.

The protein localises to the cytoplasm. The protein resides in the cytosol. It is found in the peroxisome membrane. The enzyme catalyses ATP + H2O = ADP + phosphate + H(+). Component of the PEX1-PEX6 AAA ATPase complex, a protein dislocase complex that mediates the ATP-dependent extraction of the PEX5 receptor from peroxisomal membranes, an essential step for PEX5 recycling. Specifically recognizes PEX5 monoubiquitinated at 'Cys-6', and pulls it out of the peroxisome lumen through the PEX2-PEX10-PEX12 retrotranslocation channel. Extraction by the PEX1-PEX6 AAA ATPase complex is accompanied by unfolding of the TPR repeats and release of bound cargo from PEX5. The chain is Peroxisomal ATPase PEX6 from Saccharomyces cerevisiae (strain ATCC 204508 / S288c) (Baker's yeast).